Here is a 405-residue protein sequence, read N- to C-terminus: Arginine biosynthesis bifunctional protein ArgJ (405 aa).

Substrate contacts are provided by Thr152, Lys178, Thr189, Glu276, Asn400, and Thr405. The Nucleophile role is filled by Thr189.

Belongs to the ArgJ family. Heterotetramer of two alpha and two beta chains.

It is found in the cytoplasm. The catalysed reaction is N(2)-acetyl-L-ornithine + L-glutamate = N-acetyl-L-glutamate + L-ornithine. It carries out the reaction L-glutamate + acetyl-CoA = N-acetyl-L-glutamate + CoA + H(+). It participates in amino-acid biosynthesis; L-arginine biosynthesis; L-ornithine and N-acetyl-L-glutamate from L-glutamate and N(2)-acetyl-L-ornithine (cyclic): step 1/1. Its pathway is amino-acid biosynthesis; L-arginine biosynthesis; N(2)-acetyl-L-ornithine from L-glutamate: step 1/4. In terms of biological role, catalyzes two activities which are involved in the cyclic version of arginine biosynthesis: the synthesis of N-acetylglutamate from glutamate and acetyl-CoA as the acetyl donor, and of ornithine by transacetylation between N(2)-acetylornithine and glutamate. This is Arginine biosynthesis bifunctional protein ArgJ from Pseudomonas syringae pv. syringae (strain B728a).